Reading from the N-terminus, the 576-residue chain is uncharacterized protein (576 aa).

Topologically, residues 1-8 (MSLSLGAA) are cytoplasmic. The helical transmembrane segment at 9–29 (IYIALKPIFKIYTIMLVGYLV) threads the bilayer. The Extracellular portion of the chain corresponds to 30–45 (AKFDIVSMENAKGISN). A helical transmembrane segment spans residues 46–66 (MVVNAILPCLTFNKIVSNISW). Over 67–71 (RDIKE) the chain is Cytoplasmic. Residues 72-92 (IGVIILSAFILFVLGATGALF) traverse the membrane as a helical segment. Topologically, residues 93–103 (TTFATTVPKKF) are extracellular. A helical transmembrane segment spans residues 104-124 (FWGLIFAGFFPNISDLPIAYI). Topologically, residues 125-141 (QSMGNGSIFTAEEADKG) are cytoplasmic. The helical transmembrane segment at 142–162 (VAYSCIFLFIQSFLMMNFGMW) threads the bilayer. The Extracellular segment spans residues 163–400 (RVVGLDFRDT…FIINCLRPAS (238 aa)). The helical transmembrane segment at 401 to 421 (LGAILGIICALIPWVKACFVT) threads the bilayer. Topologically, residues 422–437 (TYVHVHKAPDGEPVLN) are cytoplasmic. Residues 438-458 (FLMDFTEYIGNACVPLGLLLL) form a helical membrane-spanning segment. Residues 459–476 (GGTLARLEIKSLPPGFIK) are Extracellular-facing. A helical transmembrane segment spans residues 477–497 (SALLMTCFRLIVIPIIGVLWV). Residues 498–512 (NKLYSIDWLDTGIGK) lie on the Cytoplasmic side of the membrane. The helical transmembrane segment at 513-533 (FDMILTWSMPSATAQVYFTAF) threads the bilayer. The Extracellular segment spans residues 534–545 (YTPACGDHIQMN). Residues 546 to 566 (CLSVLFVMQYAILFITVAFVV) form a helical membrane-spanning segment. Topologically, residues 567–576 (TYTLKVDLKV) are cytoplasmic.

It belongs to the auxin efflux carrier (TC 2.A.69) family.

It localises to the membrane. This is an uncharacterized protein from Saccharomyces cerevisiae (strain ATCC 204508 / S288c) (Baker's yeast).